Consider the following 310-residue polypeptide: Peroxidase 44 (310 aa).

Residues 1–20 form the signal peptide; the sequence is MRSITALFFLFCFLAPSALA. Intrachain disulfides connect C31-C110, C64-C69, C116-C305, and C194-C218. The Proton acceptor role is filled by H62. The Ca(2+) site is built by D63, V66, G68, D70, and S72. P156 contributes to the substrate binding site. Residue H187 coordinates heme b. S188 serves as a coordination point for Ca(2+). Ca(2+) is bound by residues D229, T232, and D237.

The protein belongs to the peroxidase family. Classical plant (class III) peroxidase subfamily. Requires heme b as cofactor. It depends on Ca(2+) as a cofactor.

The protein localises to the secreted. It catalyses the reaction 2 a phenolic donor + H2O2 = 2 a phenolic radical donor + 2 H2O. Removal of H(2)O(2), oxidation of toxic reductants, biosynthesis and degradation of lignin, suberization, auxin catabolism, response to environmental stresses such as wounding, pathogen attack and oxidative stress. These functions might be dependent on each isozyme/isoform in each plant tissue. The polypeptide is Peroxidase 44 (PER44) (Arabidopsis thaliana (Mouse-ear cress)).